Consider the following 429-residue polypeptide: Adenosylhomocysteinase (429 aa).

Positions 64, 136, and 161 each coordinate substrate. 162-164 is a binding site for NAD(+); it reads TTT. The substrate site is built by lysine 191 and aspartate 195. Residues asparagine 196, 225–230, glutamate 248, asparagine 283, 304–306, and asparagine 351 each bind NAD(+); these read GYGWCG and SGH.

The protein belongs to the adenosylhomocysteinase family. Requires NAD(+) as cofactor.

The protein resides in the cytoplasm. The catalysed reaction is S-adenosyl-L-homocysteine + H2O = L-homocysteine + adenosine. The protein operates within amino-acid biosynthesis; L-homocysteine biosynthesis; L-homocysteine from S-adenosyl-L-homocysteine: step 1/1. May play a key role in the regulation of the intracellular concentration of adenosylhomocysteine. The sequence is that of Adenosylhomocysteinase from Thermosynechococcus vestitus (strain NIES-2133 / IAM M-273 / BP-1).